Consider the following 908-residue polypeptide: Probable RNA-directed DNA polymerase from transposon X-element (908 aa).

Positions Ala-481–Leu-752 constitute a Reverse transcriptase domain. The tract at residues Arg-883–Ser-908 is disordered.

Mg(2+) serves as cofactor. It depends on Mn(2+) as a cofactor.

The enzyme catalyses DNA(n) + a 2'-deoxyribonucleoside 5'-triphosphate = DNA(n+1) + diphosphate. The sequence is that of Probable RNA-directed DNA polymerase from transposon X-element (X-element\ORF2) from Drosophila melanogaster (Fruit fly).